We begin with the raw amino-acid sequence, 225 residues long: MVLKRIRDMFVASVHEGLDKMENPKVMLNQYVRDMESDIAKAKQTIVKQHTIAYQFKKKYEEAAEVAGKRKNQAQLAFDAGEEELAKKALTEMKYLEGKAAEHKASYEQANSQLADLKEQLAALETKLQDVKDKKQALIARANAAKAKEHMNTTFDKIDSESAYREFLRIENRIEEMEIRANYSKSAEAGTELTRKEFADDVEAEIEKMRTLSLQKSDQTKAANE.

2 coiled-coil regions span residues 58–151 (KKYE…KEHM) and 161–182 (ESAYREFLRIENRIEEMEIRAN).

Belongs to the PspA/Vipp/IM30 family.

The polypeptide is Protein LiaH (liaH) (Bacillus subtilis (strain 168)).